The chain runs to 498 residues: ATP synthase subunit beta, chloroplastic (498 aa).

Position 172 to 179 (172 to 179 (GGAGVGKT)) interacts with ATP.

This sequence belongs to the ATPase alpha/beta chains family. F-type ATPases have 2 components, CF(1) - the catalytic core - and CF(0) - the membrane proton channel. CF(1) has five subunits: alpha(3), beta(3), gamma(1), delta(1), epsilon(1). CF(0) has four main subunits: a(1), b(1), b'(1) and c(9-12).

The protein resides in the plastid. Its subcellular location is the chloroplast thylakoid membrane. It catalyses the reaction ATP + H2O + 4 H(+)(in) = ADP + phosphate + 5 H(+)(out). Functionally, produces ATP from ADP in the presence of a proton gradient across the membrane. The catalytic sites are hosted primarily by the beta subunits. The protein is ATP synthase subunit beta, chloroplastic of Illicium oligandrum (Star anise).